The sequence spans 607 residues: TOM1-like protein 8 (607 aa).

The 130-residue stretch at 9-138 folds into the VHS domain; it reads ATSDMLIGPD…ELLRAGIVFP (130 aa). Positions 141 to 175 are disordered; sequence PQITPSSGQNGPSTRYPQNSRNARQEAIDTSTESE. Residues 175–263 form the GAT domain; the sequence is EFPTLSLTEI…LLAKHEAIAS (89 aa). Ser297 bears the Phosphoserine mark. Positions 355-379 are enriched in polar residues; that stretch reads NNCESSTPTSNPHANHQKVQQNYSN. Disordered stretches follow at residues 355-393, 407-460, and 555-582; these read NNCE…YYGQ, QPSS…SPTH, and DNGN…NKKP. The residue at position 410 (Ser410) is a Phosphoserine. Positions 448–460 are enriched in low complexity; that stretch reads QSPSSSPQYSPTH. Residues 555 to 569 show a composition bias toward polar residues; it reads DNGNNNTNPYQVSSH.

This sequence belongs to the TOM1 family. Specifically expressed in siliques and flowers.

It is found in the membrane. In terms of biological role, might contribute to the loading of the ESCRT machinery. This is TOM1-like protein 8 from Arabidopsis thaliana (Mouse-ear cress).